We begin with the raw amino-acid sequence, 383 residues long: Serine protease 23 (383 aa).

Residues 1 to 23 (MAGIPGLLILLLVLLCVFMQVSP) form the signal peptide. Asn93 carries an N-linked (GlcNAc...) asparagine glycan. Cys160 and Cys176 are joined by a disulfide. The Charge relay system role is filled by His175. Asn207 carries an N-linked (GlcNAc...) asparagine glycan. Active-site charge relay system residues include Asp240 and Ser316.

The protein belongs to the peptidase S1 family.

The protein resides in the secreted. This is Serine protease 23 (Prss23) from Rattus norvegicus (Rat).